The primary structure comprises 237 residues: ATP-dependent dethiobiotin synthetase BioD (237 aa).

An ATP-binding site is contributed by 21-26 (GVGKTV). T25 is a binding site for Mg(2+). The active site involves K48. A substrate-binding site is contributed by T52. ATP-binding positions include D56, 117-120 (EALG), 177-178 (SC), and 209-211 (PYL). The Mg(2+) site is built by D56 and E117.

The protein belongs to the dethiobiotin synthetase family. Homodimer. Mg(2+) is required as a cofactor.

The protein resides in the cytoplasm. The enzyme catalyses (7R,8S)-7,8-diammoniononanoate + CO2 + ATP = (4R,5S)-dethiobiotin + ADP + phosphate + 3 H(+). It catalyses the reaction (7R,8S)-8-amino-7-(carboxyamino)nonanoate + ATP = (4R,5S)-dethiobiotin + ADP + phosphate + H(+). The protein operates within cofactor biosynthesis; biotin biosynthesis; biotin from 7,8-diaminononanoate: step 1/2. Functionally, catalyzes a mechanistically unusual reaction, the ATP-dependent insertion of CO2 between the N7 and N8 nitrogen atoms of 7,8-diaminopelargonic acid (DAPA, also called 7,8-diammoniononanoate) to form a ureido ring. This cyanobacterium does not encode bioA (which catalyzes the formation of the precursor for this reaction in the cannonical pathway), instead it encodes bioU, which replaces bioA and also performs the first half of the cannonical BioD reaction. Thus in this bacteria BioD has a different substrate. In Synechocystis replacement of bioU by bioA from E.coli leads to biotin synthesis, showing BioD can use the 'cannonical' 7,8-diammoniononanoate as a substrate. This is ATP-dependent dethiobiotin synthetase BioD from Synechocystis sp. (strain ATCC 27184 / PCC 6803 / Kazusa).